A 202-amino-acid polypeptide reads, in one-letter code: dITP/XTP pyrophosphatase (202 aa).

T9–K14 lines the substrate pocket. D73 serves as the catalytic Proton acceptor. D73 serves as a coordination point for Mg(2+). Substrate is bound by residues S74, F158–D161, K181, and H186–R187.

It belongs to the HAM1 NTPase family. Homodimer. Requires Mg(2+) as cofactor.

It catalyses the reaction XTP + H2O = XMP + diphosphate + H(+). The catalysed reaction is dITP + H2O = dIMP + diphosphate + H(+). The enzyme catalyses ITP + H2O = IMP + diphosphate + H(+). In terms of biological role, pyrophosphatase that catalyzes the hydrolysis of nucleoside triphosphates to their monophosphate derivatives, with a high preference for the non-canonical purine nucleotides XTP (xanthosine triphosphate), dITP (deoxyinosine triphosphate) and ITP. Seems to function as a house-cleaning enzyme that removes non-canonical purine nucleotides from the nucleotide pool, thus preventing their incorporation into DNA/RNA and avoiding chromosomal lesions. This is dITP/XTP pyrophosphatase from Lactobacillus acidophilus (strain ATCC 700396 / NCK56 / N2 / NCFM).